The sequence spans 291 residues: uncharacterized protein (291 aa).

In terms of biological role, essential for virus function. This is an uncharacterized protein from Sulfolobus spindle-shape virus 1 (SSV1).